The following is a 176-amino-acid chain: Peptide deformylase (176 aa).

Fe cation-binding residues include C97 and H139. E140 is an active-site residue. Position 143 (H143) interacts with Fe cation.

The protein belongs to the polypeptide deformylase family. Fe(2+) serves as cofactor.

It catalyses the reaction N-terminal N-formyl-L-methionyl-[peptide] + H2O = N-terminal L-methionyl-[peptide] + formate. Its function is as follows. Removes the formyl group from the N-terminal Met of newly synthesized proteins. Requires at least a dipeptide for an efficient rate of reaction. N-terminal L-methionine is a prerequisite for activity but the enzyme has broad specificity at other positions. This chain is Peptide deformylase, found in Thermomicrobium roseum (strain ATCC 27502 / DSM 5159 / P-2).